A 228-amino-acid polypeptide reads, in one-letter code: MNRASLEKDPHEVASMFDGVARRYDLTNTVLSLGQDRFWRRATREALQLSPSDKVLDLAAGTAVSTVELAGSGAWCVAADFSVGMLAAGAARDVPKVAGDATRLPFADGVFDAVTISFGLRNVVDHSAGLREMARVTRPGGRLVVCEFSTPTNKLFATVYKEYLMRALPAMASAVSSNPDAYVYLAESIRAWPDQAELAARIEAAGWSDVRWRNLTGGIVALHAATKA.

S-adenosyl-L-methionine-binding positions include T62, D80, 100–101, and S117; that span reads DA.

The protein belongs to the class I-like SAM-binding methyltransferase superfamily. MenG/UbiE family.

The enzyme catalyses a 2-demethylmenaquinol + S-adenosyl-L-methionine = a menaquinol + S-adenosyl-L-homocysteine + H(+). It participates in quinol/quinone metabolism; menaquinone biosynthesis; menaquinol from 1,4-dihydroxy-2-naphthoate: step 2/2. Functionally, methyltransferase required for the conversion of demethylmenaquinol (DMKH2) to menaquinol (MKH2). The protein is Demethylmenaquinone methyltransferase of Mycolicibacterium vanbaalenii (strain DSM 7251 / JCM 13017 / BCRC 16820 / KCTC 9966 / NRRL B-24157 / PYR-1) (Mycobacterium vanbaalenii).